The sequence spans 433 residues: Serine--tRNA ligase (433 aa).

An L-serine-binding site is contributed by 236–238 (TAE). 267–269 (RSE) is an ATP binding site. L-serine is bound at residue E290. Position 354–357 (354–357 (EISS)) interacts with ATP. S394 serves as a coordination point for L-serine.

The protein belongs to the class-II aminoacyl-tRNA synthetase family. Type-1 seryl-tRNA synthetase subfamily. In terms of assembly, homodimer. The tRNA molecule binds across the dimer.

The protein localises to the cytoplasm. The enzyme catalyses tRNA(Ser) + L-serine + ATP = L-seryl-tRNA(Ser) + AMP + diphosphate + H(+). It carries out the reaction tRNA(Sec) + L-serine + ATP = L-seryl-tRNA(Sec) + AMP + diphosphate + H(+). It participates in aminoacyl-tRNA biosynthesis; selenocysteinyl-tRNA(Sec) biosynthesis; L-seryl-tRNA(Sec) from L-serine and tRNA(Sec): step 1/1. In terms of biological role, catalyzes the attachment of serine to tRNA(Ser). Is also able to aminoacylate tRNA(Sec) with serine, to form the misacylated tRNA L-seryl-tRNA(Sec), which will be further converted into selenocysteinyl-tRNA(Sec). The protein is Serine--tRNA ligase of Acidiphilium cryptum (strain JF-5).